The primary structure comprises 195 residues: Imidazoleglycerol-phosphate dehydratase (195 aa).

The protein belongs to the imidazoleglycerol-phosphate dehydratase family.

The protein resides in the cytoplasm. It carries out the reaction D-erythro-1-(imidazol-4-yl)glycerol 3-phosphate = 3-(imidazol-4-yl)-2-oxopropyl phosphate + H2O. Its pathway is amino-acid biosynthesis; L-histidine biosynthesis; L-histidine from 5-phospho-alpha-D-ribose 1-diphosphate: step 6/9. The protein is Imidazoleglycerol-phosphate dehydratase of Bordetella petrii (strain ATCC BAA-461 / DSM 12804 / CCUG 43448).